Here is a 75-residue protein sequence, read N- to C-terminus: MKTFFKDMAERAIKTFAQAMIGALGAGATGLIGVDWLQALSIAGFATVVSILTSLASGIPGDNTASLVNNKKEGE.

The next 2 helical transmembrane spans lie at 16-36 (FAQA…GVDW) and 39-59 (ALSI…ASGI).

Homomultimer.

Its subcellular location is the host cell inner membrane. Functionally, accumulates harmlessly in the cytoplasmic membrane until it reaches a critical concentration that triggers the formation of micron-scale pores (holes) causing host cell membrane disruption and endolysin escape into the periplasmic space. Determines the precise timing of host cell lysis. Participates with the endolysin protein in the sequential events which lead to the programmed host cell lysis releasing the mature viral particles from the host cell. In Lactococcus lactis subsp. cremoris (Streptococcus cremoris), this protein is Holin.